Here is a 428-residue protein sequence, read N- to C-terminus: Histidinol dehydrogenase (428 aa).

3 residues coordinate NAD(+): tyrosine 129, glutamine 188, and asparagine 211. Residues serine 234, glutamine 256, and histidine 259 each contribute to the substrate site. Zn(2+) is bound by residues glutamine 256 and histidine 259. Active-site proton acceptor residues include glutamate 323 and histidine 324. Histidine 324, aspartate 357, glutamate 411, and histidine 416 together coordinate substrate. Aspartate 357 provides a ligand contact to Zn(2+). Histidine 416 is a Zn(2+) binding site.

This sequence belongs to the histidinol dehydrogenase family. Requires Zn(2+) as cofactor.

The enzyme catalyses L-histidinol + 2 NAD(+) + H2O = L-histidine + 2 NADH + 3 H(+). Its pathway is amino-acid biosynthesis; L-histidine biosynthesis; L-histidine from 5-phospho-alpha-D-ribose 1-diphosphate: step 9/9. Catalyzes the sequential NAD-dependent oxidations of L-histidinol to L-histidinaldehyde and then to L-histidine. The chain is Histidinol dehydrogenase from Caulobacter vibrioides (strain ATCC 19089 / CIP 103742 / CB 15) (Caulobacter crescentus).